The primary structure comprises 289 residues: 4-diphosphocytidyl-2-C-methyl-D-erythritol kinase (289 aa).

Residue lysine 11 is part of the active site. ATP is bound at residue 96–106 (PVAAGIGGGSS). Residue aspartate 138 is part of the active site.

Belongs to the GHMP kinase family. IspE subfamily.

The catalysed reaction is 4-CDP-2-C-methyl-D-erythritol + ATP = 4-CDP-2-C-methyl-D-erythritol 2-phosphate + ADP + H(+). Its pathway is isoprenoid biosynthesis; isopentenyl diphosphate biosynthesis via DXP pathway; isopentenyl diphosphate from 1-deoxy-D-xylulose 5-phosphate: step 3/6. Catalyzes the phosphorylation of the position 2 hydroxy group of 4-diphosphocytidyl-2C-methyl-D-erythritol. The chain is 4-diphosphocytidyl-2-C-methyl-D-erythritol kinase from Azorhizobium caulinodans (strain ATCC 43989 / DSM 5975 / JCM 20966 / LMG 6465 / NBRC 14845 / NCIMB 13405 / ORS 571).